Reading from the N-terminus, the 390-residue chain is MKIHEYQAKEILRRHKANVPFGIVIDKKENASKAHDEVTSKTGGSVVVVKAQIHAGGRGKGGGVKVTKTKEDATAAVDKILGMQLITPQTGPEGKKVLKVYLEQGIDIAKEYYLSILLDRSIRKTILMASTEGGMEIEEVAETHPEKILKIAVDPGIGLQVNQARQLAFELGLPAESHKSFQSLVMAIYDAYIKEDASLLEINPLILTKQNEIIAGDCKIDLDENALYRHADNAAFRDITEEDPLEVQASEFNLNYVKLDGNIGCMVNGAGLAMATMDIVKLAGAEPANFLDVGGGANKTTVTNGFKIILGDPNVKGIFVNIFGGIVRCDMVAEGIIEAAKAVDLKVPLVVRLQGTNSELGREVLNKSGLKITGVDDLREAASTIAKLIK.

The ATP-grasp domain maps to 9–248 (KEILRRHKAN…ITEEDPLEVQ (240 aa)). ATP contacts are provided by residues Lys-50, 57-59 (GRG), Glu-103, Ile-106, and Glu-111. Residues Asn-203 and Asp-217 each contribute to the Mg(2+) site. Substrate contacts are provided by residues Asn-268 and 325–327 (GIV).

It belongs to the succinate/malate CoA ligase beta subunit family. In terms of assembly, heterotetramer of two alpha and two beta subunits. The cofactor is Mg(2+).

The enzyme catalyses succinate + ATP + CoA = succinyl-CoA + ADP + phosphate. The catalysed reaction is GTP + succinate + CoA = succinyl-CoA + GDP + phosphate. It functions in the pathway carbohydrate metabolism; tricarboxylic acid cycle; succinate from succinyl-CoA (ligase route): step 1/1. Succinyl-CoA synthetase functions in the citric acid cycle (TCA), coupling the hydrolysis of succinyl-CoA to the synthesis of either ATP or GTP and thus represents the only step of substrate-level phosphorylation in the TCA. The beta subunit provides nucleotide specificity of the enzyme and binds the substrate succinate, while the binding sites for coenzyme A and phosphate are found in the alpha subunit. The polypeptide is Succinate--CoA ligase [ADP-forming] subunit beta (Leptospira borgpetersenii serovar Hardjo-bovis (strain JB197)).